A 205-amino-acid chain; its full sequence is Putative STAG3-like protein 1 (205 aa).

An SCD domain is found at P10–M95.

Belongs to the SCC3 family.

The protein localises to the nucleus. The polypeptide is Putative STAG3-like protein 1 (STAG3L1) (Homo sapiens (Human)).